The following is a 33-amino-acid chain: Neutrophil defensin 1 (33 aa).

3 disulfides stabilise this stretch: C3–C31, C5–C20, and C10–C30.

The protein belongs to the alpha-defensin family.

It localises to the secreted. Anti-fungal and bactericidal activity, greater against Gram-positive bacteria. The polypeptide is Neutrophil defensin 1 (Mesocricetus auratus (Golden hamster)).